The primary structure comprises 133 residues: Ribosome-binding factor A (133 aa).

The protein belongs to the RbfA family. As to quaternary structure, monomer. Binds 30S ribosomal subunits, but not 50S ribosomal subunits or 70S ribosomes.

Its subcellular location is the cytoplasm. One of several proteins that assist in the late maturation steps of the functional core of the 30S ribosomal subunit. Associates with free 30S ribosomal subunits (but not with 30S subunits that are part of 70S ribosomes or polysomes). Required for efficient processing of 16S rRNA. May interact with the 5'-terminal helix region of 16S rRNA. In Pseudomonas fluorescens (strain Pf0-1), this protein is Ribosome-binding factor A.